Consider the following 208-residue polypeptide: Protein-L-isoaspartate O-methyltransferase (208 aa).

Residue Ser59 is part of the active site.

It belongs to the methyltransferase superfamily. L-isoaspartyl/D-aspartyl protein methyltransferase family.

It is found in the cytoplasm. The catalysed reaction is [protein]-L-isoaspartate + S-adenosyl-L-methionine = [protein]-L-isoaspartate alpha-methyl ester + S-adenosyl-L-homocysteine. In terms of biological role, catalyzes the methyl esterification of L-isoaspartyl residues in peptides and proteins that result from spontaneous decomposition of normal L-aspartyl and L-asparaginyl residues. It plays a role in the repair and/or degradation of damaged proteins. The sequence is that of Protein-L-isoaspartate O-methyltransferase from Escherichia coli O7:K1 (strain IAI39 / ExPEC).